We begin with the raw amino-acid sequence, 483 residues long: tRNA-2-methylthio-N(6)-dimethylallyladenosine synthase (483 aa).

One can recognise an MTTase N-terminal domain in the interval 31-148; the sequence is KKLYIETQGC…LPQMLDQHHA (118 aa). 6 residues coordinate [4Fe-4S] cluster: C40, C77, C111, C192, C196, and C199. The Radical SAM core domain occupies 178–410; that stretch reads RVEGFKAFVS…QQVIKQSSIE (233 aa). Residues 413 to 477 form the TRAM domain; the sequence is DAMLGKIERV…LNLVYGELLN (65 aa).

The protein belongs to the methylthiotransferase family. MiaB subfamily. In terms of assembly, monomer. It depends on [4Fe-4S] cluster as a cofactor.

Its subcellular location is the cytoplasm. It carries out the reaction N(6)-dimethylallyladenosine(37) in tRNA + (sulfur carrier)-SH + AH2 + 2 S-adenosyl-L-methionine = 2-methylsulfanyl-N(6)-dimethylallyladenosine(37) in tRNA + (sulfur carrier)-H + 5'-deoxyadenosine + L-methionine + A + S-adenosyl-L-homocysteine + 2 H(+). In terms of biological role, catalyzes the methylthiolation of N6-(dimethylallyl)adenosine (i(6)A), leading to the formation of 2-methylthio-N6-(dimethylallyl)adenosine (ms(2)i(6)A) at position 37 in tRNAs that read codons beginning with uridine. The chain is tRNA-2-methylthio-N(6)-dimethylallyladenosine synthase from Acinetobacter baumannii (strain ACICU).